The chain runs to 155 residues: Interleukin-36 receptor antagonist protein (155 aa).

Residues Cys8 and Cys154 are joined by a disulfide bond.

Belongs to the IL-1 family. In terms of assembly, interacts with cargo receptor TMED10; the interaction mediates the translocation from the cytoplasm into the ERGIC (endoplasmic reticulum-Golgi intermediate compartment) and thereby secretion. In terms of tissue distribution, predominantly expressed in skin keratinocytes but not in fibroblasts, endothelial cells or melanocytes. Detected also in the spleen, brain leukocyte and macrophage cell types. Increased in lesional psoriasis skin.

The protein resides in the cytoplasm. It localises to the secreted. Its function is as follows. Inhibits the activity of interleukin-36 (IL36A,IL36B and IL36G) by binding to receptor IL1RL2 and preventing its association with the coreceptor IL1RAP for signaling. Part of the IL-36 signaling system that is thought to be present in epithelial barriers and to take part in local inflammatory response; similar to the IL-1 system with which it shares the coreceptor. Proposed to play a role in skin inflammation. May be involved in the innate immune response to fungal pathogens, such as Aspergillus fumigatus. May activate an anti-inflammatory signaling pathway by recruiting SIGIRR. The chain is Interleukin-36 receptor antagonist protein from Homo sapiens (Human).